Here is a 484-residue protein sequence, read N- to C-terminus: HTH-type transcriptional regulator TauR (484 aa).

The region spanning 16-84 (GSLQHRLRQM…GRSGTFVSAA (69 aa)) is the HTH gntR-type domain. The segment at residues 44–63 (TRALAAHLGVARITVTLAYA) is a DNA-binding region (H-T-H motif). Lys330 is modified (N6-(pyridoxal phosphate)lysine).

It in the C-terminal section; belongs to the class-I pyridoxal-phosphate-dependent aminotransferase family. The cofactor is pyridoxal 5'-phosphate.

In terms of biological role, transcriptional activator, which is essential for taurine-dependent expression of the tpa-tauR-xsc operon. Acts by binding to direct repeats in the promoter region. The chain is HTH-type transcriptional regulator TauR from Rhodobacter capsulatus (strain ATCC BAA-309 / NBRC 16581 / SB1003).